The sequence spans 472 residues: Aspartyl/glutamyl-tRNA(Asn/Gln) amidotransferase subunit B (472 aa).

It belongs to the GatB/GatE family. GatB subfamily. In terms of assembly, heterotrimer of A, B and C subunits.

The catalysed reaction is L-glutamyl-tRNA(Gln) + L-glutamine + ATP + H2O = L-glutaminyl-tRNA(Gln) + L-glutamate + ADP + phosphate + H(+). The enzyme catalyses L-aspartyl-tRNA(Asn) + L-glutamine + ATP + H2O = L-asparaginyl-tRNA(Asn) + L-glutamate + ADP + phosphate + 2 H(+). Allows the formation of correctly charged Asn-tRNA(Asn) or Gln-tRNA(Gln) through the transamidation of misacylated Asp-tRNA(Asn) or Glu-tRNA(Gln) in organisms which lack either or both of asparaginyl-tRNA or glutaminyl-tRNA synthetases. The reaction takes place in the presence of glutamine and ATP through an activated phospho-Asp-tRNA(Asn) or phospho-Glu-tRNA(Gln). The protein is Aspartyl/glutamyl-tRNA(Asn/Gln) amidotransferase subunit B of Campylobacter jejuni subsp. doylei (strain ATCC BAA-1458 / RM4099 / 269.97).